Consider the following 209-residue polypeptide: Interleukin-6 (209 aa).

A signal peptide spans Arg1 to Pro26. The tract at residues Pro28–Pro47 is disordered. Residues Cys69 and Cys75 are joined by a disulfide bond. Ser78 carries the phosphoserine modification. Cys98 and Cys108 form a disulfide bridge.

Belongs to the IL-6 superfamily. As to quaternary structure, component of a hexamer of two molecules each of IL6, IL6R and IL6ST; first binds to IL6R to associate with the signaling subunit IL6ST. Interacts with IL6R (via the N-terminal ectodomain); this interaction may be affected by IL6R-binding with SORL1, hence decreasing IL6 cis signaling. Interacts with SORL1 (via the N-terminal ectodomain); this interaction leads to IL6 internalization and lysosomal degradation. May form a trimeric complex with the soluble SORL1 ectodomain and soluble IL6R receptor; this interaction might stabilize circulating IL6, hence promoting IL6 trans signaling.

The protein resides in the secreted. In terms of biological role, cytokine with a wide variety of biological functions in immunity, tissue regeneration, and metabolism. Binds to IL6R, then the complex associates to the signaling subunit IL6ST/gp130 to trigger the intracellular IL6-signaling pathway. The interaction with the membrane-bound IL6R and IL6ST stimulates 'classic signaling', whereas the binding of IL6 and soluble IL6R to IL6ST stimulates 'trans-signaling'. Alternatively, 'cluster signaling' occurs when membrane-bound IL6:IL6R complexes on transmitter cells activate IL6ST receptors on neighboring receiver cells. IL6 is a potent inducer of the acute phase response. Rapid production of IL6 contributes to host defense during infection and tissue injury, but excessive IL6 synthesis is involved in disease pathology. In the innate immune response, is synthesized by myeloid cells, such as macrophages and dendritic cells, upon recognition of pathogens through toll-like receptors (TLRs) at the site of infection or tissue injury. In the adaptive immune response, is required for the differentiation of B cells into immunoglobulin-secreting cells. Plays a major role in the differentiation of CD4(+) T cell subsets. Essential factor for the development of T follicular helper (Tfh) cells that are required for the induction of germinal-center formation. Required to drive naive CD4(+) T cells to the Th17 lineage. Also required for proliferation of myeloma cells and the survival of plasmablast cells. Its function is as follows. Acts as an essential factor in bone homeostasis and on vessels directly or indirectly by induction of VEGF, resulting in increased angiogenesis activity and vascular permeability. Induces, through 'trans-signaling' and synergistically with IL1B and TNF, the production of VEGF. Involved in metabolic controls, is discharged into the bloodstream after muscle contraction increasing lipolysis and improving insulin resistance. 'Trans-signaling' in central nervous system also regulates energy and glucose homeostasis. Mediates, through GLP-1, crosstalk between insulin-sensitive tissues, intestinal L cells and pancreatic islets to adapt to changes in insulin demand. Also acts as a myokine. Plays a protective role during liver injury, being required for maintenance of tissue regeneration. Also has a pivotal role in iron metabolism by regulating HAMP/hepcidin expression upon inflammation or bacterial infection. Through activation of IL6ST-YAP-NOTCH pathway, induces inflammation-induced epithelial regeneration. The protein is Interleukin-6 (IL6) of Phoca vitulina (Harbor seal).